The chain runs to 719 residues: Mini-chromosome maintenance complex-binding protein (719 aa).

The span at 152–174 shows a compositional bias: low complexity; that stretch reads NNNNNNNNNNNNNNNNNNNNNNN. Disordered regions lie at residues 152–179, 194–236, and 375–416; these read NNNN…NEQI, ADMK…QLTK, and TINN…NNNN. A compositionally biased stretch (basic and acidic residues) spans 194 to 211; sequence ADMKNENDEENKKSKDQK. Composition is skewed to low complexity over residues 212–221 and 377–416; these read STTTTTTTTS and NNNN…NNNN.

The protein belongs to the MCMBP family. As to quaternary structure, interacts with the MCM complex.

The protein localises to the nucleus. Associated component of the MCM complex that acts as a regulator of DNA replication. Binds to the MCM complex during late S phase and may act by promoting the disassembly of the MCM complex from chromatin. This is Mini-chromosome maintenance complex-binding protein (mcmbp) from Dictyostelium discoideum (Social amoeba).